A 350-amino-acid chain; its full sequence is Probable V-type proton ATPase subunit d 2 (350 aa).

The protein belongs to the V-ATPase V0D/AC39 subunit family. V-ATPase is a heteromultimeric enzyme made up of two complexes: the ATP-hydrolytic V1 complex and the proton translocation V0 complex. The V1 complex consists of three catalytic AB heterodimers that form a heterohexamer, three peripheral stalks each consisting of EG heterodimers, one central rotor including subunits D and F, and the regulatory subunits C and H. The proton translocation complex V0 consists of the proton transport subunit a, a ring of proteolipid subunits c9c'', rotary subunit d, subunits e and f, and the accessory subunits VhaAC45 and ATP6AP2.

Functionally, subunit of the V0 complex of vacuolar(H+)-ATPase (V-ATPase), a multisubunit enzyme composed of a peripheral complex (V1) that hydrolyzes ATP and a membrane integral complex (V0) that translocates protons. V-ATPase is responsible for acidifying and maintaining the pH of intracellular compartments and in some cell types, is targeted to the plasma membrane, where it is responsible for acidifying the extracellular environment. May play a role in coupling of proton transport and ATP hydrolysis. The protein is Probable V-type proton ATPase subunit d 2 (VhaAC39-2) of Drosophila melanogaster (Fruit fly).